A 1579-amino-acid chain; its full sequence is tRNA (guanosine(18)-2'-O)-methyltransferase TARBP1 (1579 aa).

An N-acetylmethionine modification is found at Met-1. Residues Val-1501, Gly-1524, Ile-1544, Gln-1546, and Leu-1553 each contribute to the S-adenosyl-L-homocysteine site.

The protein belongs to the class IV-like SAM-binding methyltransferase superfamily. RNA methyltransferase TrmH family. In terms of assembly, monomer and homodimer.

It carries out the reaction guanosine(18) in tRNA + S-adenosyl-L-methionine = 2'-O-methylguanosine(18) in tRNA + S-adenosyl-L-homocysteine + H(+). S-adenosyl-L-methionine-dependent 2'-O-ribose methyltransferase that catalyzes the formation of 2'-O-methylguanosine at position 18 (Gm18) in a subset of tRNA. Selectively mediates Gm18 methylation of tRNAGln-TTG/CTG and tRNASer-TGA/GCT. Gm18 modification can enhance the stability of modified tRNAs. The polypeptide is tRNA (guanosine(18)-2'-O)-methyltransferase TARBP1 (Mus musculus (Mouse)).